We begin with the raw amino-acid sequence, 274 residues long: Diaminopimelate epimerase (274 aa).

3 residues coordinate substrate: N11, Q44, and N64. C73 (proton donor) is an active-site residue. Substrate is bound by residues 74 to 75 (GN), N157, N190, and 208 to 209 (ER). The active-site Proton acceptor is the C217. Position 218–219 (218–219 (GS)) interacts with substrate.

The protein belongs to the diaminopimelate epimerase family. Homodimer.

Its subcellular location is the cytoplasm. It catalyses the reaction (2S,6S)-2,6-diaminopimelate = meso-2,6-diaminopimelate. It participates in amino-acid biosynthesis; L-lysine biosynthesis via DAP pathway; DL-2,6-diaminopimelate from LL-2,6-diaminopimelate: step 1/1. Its function is as follows. Catalyzes the stereoinversion of LL-2,6-diaminopimelate (L,L-DAP) to meso-diaminopimelate (meso-DAP), a precursor of L-lysine and an essential component of the bacterial peptidoglycan. The chain is Diaminopimelate epimerase from Edwardsiella ictaluri (strain 93-146).